Here is a 227-residue protein sequence, read N- to C-terminus: ATP synthase F(0) complex subunit a (227 aa).

6 consecutive transmembrane segments (helical) span residues Y14–P34, W69–L89, Q98–L118, E132–I152, V179–L199, and L202–Y222.

This sequence belongs to the ATPase A chain family. In terms of assembly, component of the ATP synthase complex composed at least of ATP5F1A/subunit alpha, ATP5F1B/subunit beta, ATP5MC1/subunit c (homooctomer), MT-ATP6/subunit a, MT-ATP8/subunit 8, ATP5ME/subunit e, ATP5MF/subunit f, ATP5MG/subunit g, ATP5MK/subunit k, ATP5MJ/subunit j, ATP5F1C/subunit gamma, ATP5F1D/subunit delta, ATP5F1E/subunit epsilon, ATP5PF/subunit F6, ATP5PB/subunit b, ATP5PD/subunit d, ATP5PO/subunit OSCP. ATP synthase complex consists of a soluble F(1) head domain (subunits alpha(3) and beta(3)) - the catalytic core - and a membrane F(0) domain - the membrane proton channel (subunits c, a, 8, e, f, g, k and j). These two domains are linked by a central stalk (subunits gamma, delta, and epsilon) rotating inside the F1 region and a stationary peripheral stalk (subunits F6, b, d, and OSCP). Interacts with DNAJC30; interaction is direct.

It localises to the mitochondrion inner membrane. It catalyses the reaction H(+)(in) = H(+)(out). Its function is as follows. Subunit a, of the mitochondrial membrane ATP synthase complex (F(1)F(0) ATP synthase or Complex V) that produces ATP from ADP in the presence of a proton gradient across the membrane which is generated by electron transport complexes of the respiratory chain. ATP synthase complex consist of a soluble F(1) head domain - the catalytic core - and a membrane F(1) domain - the membrane proton channel. These two domains are linked by a central stalk rotating inside the F(1) region and a stationary peripheral stalk. During catalysis, ATP synthesis in the catalytic domain of F(1) is coupled via a rotary mechanism of the central stalk subunits to proton translocation. With the subunit c (ATP5MC1), forms the proton-conducting channel in the F(0) domain, that contains two crucial half-channels (inlet and outlet) that facilitate proton movement from the mitochondrial intermembrane space (IMS) into the matrix. Protons are taken up via the inlet half-channel and released through the outlet half-channel, following a Grotthuss mechanism. This chain is ATP synthase F(0) complex subunit a, found in Formosania lacustris (Oriental stream loach).